The primary structure comprises 592 residues: Aspartate--tRNA(Asp/Asn) ligase (592 aa).

E176 is an L-aspartate binding site. Residues Q200–K203 are aspartate. R222 provides a ligand contact to L-aspartate. Residues R222–E224 and Q231 contribute to the ATP site. H450 is an L-aspartate binding site. Residue E484 participates in ATP binding. R491 contacts L-aspartate. ATP is bound at residue G536–R539.

The protein belongs to the class-II aminoacyl-tRNA synthetase family. Type 1 subfamily. As to quaternary structure, homodimer.

It is found in the cytoplasm. The catalysed reaction is tRNA(Asx) + L-aspartate + ATP = L-aspartyl-tRNA(Asx) + AMP + diphosphate. In terms of biological role, aspartyl-tRNA synthetase with relaxed tRNA specificity since it is able to aspartylate not only its cognate tRNA(Asp) but also tRNA(Asn). Reaction proceeds in two steps: L-aspartate is first activated by ATP to form Asp-AMP and then transferred to the acceptor end of tRNA(Asp/Asn). The sequence is that of Aspartate--tRNA(Asp/Asn) ligase from Anoxybacillus flavithermus (strain DSM 21510 / WK1).